Reading from the N-terminus, the 353-residue chain is Methylthioribose-1-phosphate isomerase (353 aa).

Residues 51 to 53, R94, and Q199 contribute to the substrate site; that span reads RGA. Residue D240 is the Proton donor of the active site. Residue 250–251 participates in substrate binding; it reads NK.

The protein belongs to the eIF-2B alpha/beta/delta subunits family. MtnA subfamily. In terms of assembly, homodimer.

It catalyses the reaction 5-(methylsulfanyl)-alpha-D-ribose 1-phosphate = 5-(methylsulfanyl)-D-ribulose 1-phosphate. It functions in the pathway amino-acid biosynthesis; L-methionine biosynthesis via salvage pathway; L-methionine from S-methyl-5-thio-alpha-D-ribose 1-phosphate: step 1/6. Its function is as follows. Catalyzes the interconversion of methylthioribose-1-phosphate (MTR-1-P) into methylthioribulose-1-phosphate (MTRu-1-P). This is Methylthioribose-1-phosphate isomerase from Bacillus velezensis (strain DSM 23117 / BGSC 10A6 / LMG 26770 / FZB42) (Bacillus amyloliquefaciens subsp. plantarum).